Consider the following 123-residue polypeptide: Amoebiasin-2 (123 aa).

Residues Met1–Ala16 form the signal peptide. A BC loop motif is present at residues Asn45 to Tyr50. The short motif at Glu71 to Pro81 is the DE loop element. The FG loop signature appears at Pro105–Arg114.

Belongs to the protease inhibitor I42 family. In terms of assembly, monomer. May form homodimer. Interacts with cysteine protease CP2. Interacts with cysteine protease CP5.

Its subcellular location is the cytoplasmic vesicle. The protein localises to the lysosome. It is found in the phagosome. Functionally, cysteine protease inhibitor. Inhibits cysteine proteases CP1, CP2 and to a lesser extent CP5. This is Amoebiasin-2 from Entamoeba histolytica (strain ATCC 30459 / HM-1:IMSS / ABRM).